A 461-amino-acid polypeptide reads, in one-letter code: Argininosuccinate lyase (461 aa).

It belongs to the lyase 1 family. Argininosuccinate lyase subfamily.

It is found in the cytoplasm. It carries out the reaction 2-(N(omega)-L-arginino)succinate = fumarate + L-arginine. It participates in amino-acid biosynthesis; L-arginine biosynthesis; L-arginine from L-ornithine and carbamoyl phosphate: step 3/3. The polypeptide is Argininosuccinate lyase (Trichormus variabilis (strain ATCC 29413 / PCC 7937) (Anabaena variabilis)).